A 167-amino-acid polypeptide reads, in one-letter code: Translationally-controlled tumor protein homolog (167 aa).

The TCTP domain occupies 1-167; it reads MIIYKDIFSG…WKHGIDEEKI (167 aa).

It belongs to the TCTP family.

It is found in the cytoplasm. It localises to the cytoskeleton. Functionally, involved in protein synthesis. Involved in microtubule stabilization. The polypeptide is Translationally-controlled tumor protein homolog (Candida glabrata (strain ATCC 2001 / BCRC 20586 / JCM 3761 / NBRC 0622 / NRRL Y-65 / CBS 138) (Yeast)).